The primary structure comprises 492 residues: Nuclear autoantigenic sperm protein homolog (492 aa).

Residues 1 to 14 show a composition bias toward low complexity; it reads MSAEAEAIVTTATA. 2 disordered regions span residues 1-52 and 123-254; these read MSAE…EQER and DVPD…EEGV. T32 and T33 each carry phosphothreonine. A compositionally biased stretch (acidic residues) spans 124-145; that stretch reads VPDEAADDDDEDVDDDEEESAE. 2 stretches are compositionally biased toward basic and acidic residues: residues 147 to 159 and 170 to 179; these read GAAK…DTKE and KELDTIKEGS. Residues S179 and S184 each carry the phosphoserine modification. T185 carries the post-translational modification Phosphothreonine. The residue at position 193 (S193) is a Phosphoserine. Over residues 226–238 the composition is skewed to polar residues; sequence STSNGEVTASCSN. Acidic residues predominate over residues 244-253; that stretch reads VEEEPEEEEG. TPR repeat units lie at residues 284 to 317 and 326 to 359; these read AEVQ…HGEL and AELH…IEEE. A coiled-coil region spans residues 377–400; sequence MLDLEETKQEILAKIQEIEEMQAQ. Residues 418–459 show a composition bias toward low complexity; sequence SGDAAAASSSSSSSANGAASSSSSSSKGAAAASSSTISSSSA. The tract at residues 418–492 is disordered; that stretch reads SGDAAAASSS…LCSPAKRAAV (75 aa). A phosphoserine mark is found at S478 and S485.

The protein belongs to the NASP family. In terms of assembly, interacts with the histone H3-H4 heterodimer; the interaction with H4 is probably indirect and mediated by H3 (His3, His3.3A and His3.3B). Interacts with His2Av; this interaction directly or indirectly destabilizes His2Av.

It localises to the cytoplasm. The protein localises to the nucleus. It is found in the perinuclear region. Its function is as follows. Component of the histone chaperone network. Binds and stabilizes histone H3-H4 not bound to chromatin to maintain a soluble reservoir and modulate degradation by chaperone-mediated autophagy. May also bind and stabilize monomeric H3. Maternal effect gene essential for early embryogenesis. This Drosophila melanogaster (Fruit fly) protein is Nuclear autoantigenic sperm protein homolog.